The primary structure comprises 688 residues: DNA ligase (688 aa).

NAD(+) is bound by residues 51–55 (DSEYD), 100–101 (SL), and Glu-129. Lys-131 serves as the catalytic N6-AMP-lysine intermediate. Positions 152, 189, 308, and 332 each coordinate NAD(+). Positions 426, 429, 444, and 450 each coordinate Zn(2+). Positions 609-688 (ADEQPLKGQT…DELLALLANS (80 aa)) constitute a BRCT domain.

It belongs to the NAD-dependent DNA ligase family. LigA subfamily. Mg(2+) serves as cofactor. Requires Mn(2+) as cofactor.

It carries out the reaction NAD(+) + (deoxyribonucleotide)n-3'-hydroxyl + 5'-phospho-(deoxyribonucleotide)m = (deoxyribonucleotide)n+m + AMP + beta-nicotinamide D-nucleotide.. Functionally, DNA ligase that catalyzes the formation of phosphodiester linkages between 5'-phosphoryl and 3'-hydroxyl groups in double-stranded DNA using NAD as a coenzyme and as the energy source for the reaction. It is essential for DNA replication and repair of damaged DNA. This is DNA ligase from Shewanella sp. (strain MR-4).